The chain runs to 391 residues: NADH-quinone oxidoreductase subunit D (391 aa).

Belongs to the complex I 49 kDa subunit family. NDH-1 is composed of 14 different subunits. Subunits NuoB, C, D, E, F, and G constitute the peripheral sector of the complex.

It localises to the cell inner membrane. The enzyme catalyses a quinone + NADH + 5 H(+)(in) = a quinol + NAD(+) + 4 H(+)(out). In terms of biological role, NDH-1 shuttles electrons from NADH, via FMN and iron-sulfur (Fe-S) centers, to quinones in the respiratory chain. The immediate electron acceptor for the enzyme in this species is believed to be ubiquinone. Couples the redox reaction to proton translocation (for every two electrons transferred, four hydrogen ions are translocated across the cytoplasmic membrane), and thus conserves the redox energy in a proton gradient. This chain is NADH-quinone oxidoreductase subunit D, found in Rickettsia rickettsii (strain Sheila Smith).